Consider the following 461-residue polypeptide: Transforming growth factor beta-1-induced transcript 1 protein (461 aa).

Residue Met-1 is modified to N-acetylmethionine. Residues 1-87 form a disordered region; it reads MEDLDALLSD…PFSSSSGVLG (87 aa). The segment at 1–200 is transcription activation; that stretch reads MEDLDALLSD…GCPSPPGQTS (200 aa). The segment at 1–240 is interaction with PTK2B/PYK2; that stretch reads MEDLDALLSD…CNKPIAGQVV (240 aa). The LD motif 1 motif lies at 3-15; the sequence is DLDALLSDLETTT. At Thr-33 the chain carries Phosphothreonine. A Phosphotyrosine modification is found at Tyr-38. Residues 44 to 53 show a composition bias toward low complexity; that stretch reads TGSGESSGTT. Phosphotyrosine is present on Tyr-60. The residue at position 68 (Ser-68) is a Phosphoserine. The interaction with PTK2/FAK1 stretch occupies residues 83-136; that stretch reads SGVLGNGLCELDRLLQELNATQFNITDEIMSQFPSSKMAEGEEKEDQSEDKSSP. The LD motif 2 signature appears at 92–104; that stretch reads ELDRLLQELNATQ. Residues 116–154 are disordered; that stretch reads PSSKMAEGEEKEDQSEDKSSPTVPPSPFPAPSKPSATSA. A compositionally biased stretch (pro residues) spans 137–147; it reads TVPPSPFPAPS. Ser-141, Ser-164, and Ser-186 each carry phosphoserine. The short motif at 157–168 is the LD motif 3 element; that stretch reads ELDRLMASLSDF. Residues 171–204 are disordered; the sequence is QNHLPASGPPQPPAASPTREGCPSPPGQTSKGSL. Thr-188 carries the phosphothreonine modification. A Phosphoserine modification is found at Ser-194. Residues 203 to 215 carry the LD motif 4 motif; it reads SLDTMLGLLQSDL. 4 consecutive LIM zinc-binding domains span residues 226–285, 286–343, 344–403, and 404–461; these read GLCG…RFSP, RCGF…QLFA, PRCQ…QRGS, and LCAT…KLFG. At Ser-403 the chain carries Phosphoserine. Thr-407 carries the post-translational modification Phosphothreonine.

Belongs to the paxillin family. As to quaternary structure, homooligomer. Interacts with PPARG. Interacts with TRAF4. Interacts with CRIP2. Interacts with HSPB1. Interacts with ILK. Interacts with LIMS1 and LIMS2. Interacts with NCK2. Interacts with NUDT16L1. Interacts with PAK. Interacts with PTPN12. Interacts with TCF3. Interacts with TCF7L2. Interacts with VCL. Interacts (via LD motif 3) with GIT1. Also interacts with GIT2. Forms a complex with ARHGEF7. Interacts with AR/androgen receptor in a ligand-dependent manner. Interacts with CSK. Interacts with PTK2/FAK1 and PTK2B/PYK2. Interacts with SLC6A3. Interacts with SLC6A4. Interacts with NR3C1. Interacts with SMAD3. Interacts with MAPK15. Interacts with SRC. Interacts with LYN. Interacts with talin. Interacts (via LIM zinc-binding domain 2) with CBLC (via RING-type zinc finger); the interaction is direct and enhances CBLC E3 ubiquitin-protein ligase activity. Interacts with PARVA. Interacts with PXN. Phosphorylated by gonadotropin-releasing hormone-activated SRC. In terms of tissue distribution, ubiquitously expressed. Higher expression is detected in lung and spleen. Expression decreases during pregnancy in mammary glands. Expressed in all brain areas, with higher levels in cerebellum, prefrontal cortex and hypothalamus. Expressed in smooth muscle, myoepithelial cells and platelets (at protein level). Preferentially expressed in mesenchymal versus epithelial cells (at protein level).

It is found in the cell junction. Its subcellular location is the focal adhesion. The protein localises to the nucleus matrix. It localises to the cytoplasm. The protein resides in the cytoskeleton. In terms of biological role, functions as a molecular adapter coordinating multiple protein-protein interactions at the focal adhesion complex and in the nucleus. Links various intracellular signaling modules to plasma membrane receptors and regulates the Wnt and TGFB signaling pathways. May also regulate SLC6A3 and SLC6A4 targeting to the plasma membrane hence regulating their activity. In the nucleus, functions as a nuclear receptor coactivator regulating glucocorticoid, androgen, mineralocorticoid and progesterone receptor transcriptional activity. May play a role in the processes of cell growth, proliferation, migration, differentiation and senescence. May have a zinc-dependent DNA-binding activity. This Mus musculus (Mouse) protein is Transforming growth factor beta-1-induced transcript 1 protein (Tgfb1i1).